The following is a 490-amino-acid chain: Thiamine biosynthesis bifunctional protein ThiED (490 aa).

Residues 1–213 form a thiamine-phosphate synthase region; that stretch reads MASNGHTLRL…PDPALAATEI (213 aa). 4-amino-2-methyl-5-(diphosphooxymethyl)pyrimidine-binding positions include 50–54 and Asn82; that span reads QYRNK. Residues Asp83 and Asp102 each contribute to the Mg(2+) site. Ser121 contacts 4-amino-2-methyl-5-(diphosphooxymethyl)pyrimidine. 147–149 contacts 2-[(2R,5Z)-2-carboxy-4-methylthiazol-5(2H)-ylidene]ethyl phosphate; that stretch reads SRS. Lys150 is a 4-amino-2-methyl-5-(diphosphooxymethyl)pyrimidine binding site. 2-[(2R,5Z)-2-carboxy-4-methylthiazol-5(2H)-ylidene]ethyl phosphate is bound by residues Gly177 and 197–198; that span reads IS. The hydroxymethylpyrimidine/phosphomethylpyrimidine kinase stretch occupies residues 229–490; sequence LTVAGSDSGG…ILAAEDVRDR (262 aa). A 4-amino-5-hydroxymethyl-2-methylpyrimidine-binding site is contributed by Gln266.

The protein in the N-terminal section; belongs to the thiamine-phosphate synthase family. It in the C-terminal section; belongs to the ThiD family. Mg(2+) is required as a cofactor.

The catalysed reaction is 2-[(2R,5Z)-2-carboxy-4-methylthiazol-5(2H)-ylidene]ethyl phosphate + 4-amino-2-methyl-5-(diphosphooxymethyl)pyrimidine + 2 H(+) = thiamine phosphate + CO2 + diphosphate. It carries out the reaction 2-(2-carboxy-4-methylthiazol-5-yl)ethyl phosphate + 4-amino-2-methyl-5-(diphosphooxymethyl)pyrimidine + 2 H(+) = thiamine phosphate + CO2 + diphosphate. It catalyses the reaction 4-methyl-5-(2-phosphooxyethyl)-thiazole + 4-amino-2-methyl-5-(diphosphooxymethyl)pyrimidine + H(+) = thiamine phosphate + diphosphate. The enzyme catalyses 4-amino-5-hydroxymethyl-2-methylpyrimidine + ATP = 4-amino-2-methyl-5-(phosphooxymethyl)pyrimidine + ADP + H(+). The catalysed reaction is 4-amino-2-methyl-5-(phosphooxymethyl)pyrimidine + ATP = 4-amino-2-methyl-5-(diphosphooxymethyl)pyrimidine + ADP. Its pathway is cofactor biosynthesis; thiamine diphosphate biosynthesis; 4-amino-2-methyl-5-diphosphomethylpyrimidine from 5-amino-1-(5-phospho-D-ribosyl)imidazole: step 3/3. It functions in the pathway cofactor biosynthesis; thiamine diphosphate biosynthesis; thiamine phosphate from 4-amino-2-methyl-5-diphosphomethylpyrimidine and 4-methyl-5-(2-phosphoethyl)-thiazole: step 1/1. Functionally, condenses 4-methyl-5-(beta-hydroxyethyl)thiazole monophosphate (THZ-P) and 2-methyl-4-amino-5-hydroxymethyl pyrimidine pyrophosphate (HMP-PP) to form thiamine monophosphate (TMP). In terms of biological role, catalyzes the phosphorylation of hydroxymethylpyrimidine phosphate (HMP-P) to HMP-PP, and of HMP to HMP-P. This Geobacter sulfurreducens (strain ATCC 51573 / DSM 12127 / PCA) protein is Thiamine biosynthesis bifunctional protein ThiED (thiDE).